The chain runs to 294 residues: Protoheme IX farnesyltransferase (294 aa).

9 consecutive transmembrane segments (helical) span residues 24-44, 48-68, 96-116, 118-138, 145-165, 172-192, 211-231, 241-263, and 268-288; these read VVLL…PGWV, LIAF…AINH, ALWF…LFVN, LTAL…TGYL, NIVI…TAVT, ALLL…ALAI, GIQF…VVSL, WIYL…KLYF, and VVAM…FVFL.

The protein belongs to the UbiA prenyltransferase family. Protoheme IX farnesyltransferase subfamily.

It is found in the cell inner membrane. It catalyses the reaction heme b + (2E,6E)-farnesyl diphosphate + H2O = Fe(II)-heme o + diphosphate. Its pathway is porphyrin-containing compound metabolism; heme O biosynthesis; heme O from protoheme: step 1/1. In terms of biological role, converts heme B (protoheme IX) to heme O by substitution of the vinyl group on carbon 2 of heme B porphyrin ring with a hydroxyethyl farnesyl side group. The protein is Protoheme IX farnesyltransferase of Legionella pneumophila (strain Lens).